A 415-amino-acid polypeptide reads, in one-letter code: Leucine-rich repeat-containing protein 34 (415 aa).

LRR repeat units follow at residues Ser246–Asn272 and Thr274–Thr296.

As to quaternary structure, interacts with NPM1 and NCL. Expressed in testis where it specifically localizes to germ cells (at protein level). Not detected in other tissues tested (at protein level). Expressed in pluripotent embryonic stem cells and multipotent adult germline stem cells.

Its subcellular location is the nucleus. It localises to the nucleolus. It is found in the cytoplasm. In terms of biological role, highly expressed in stem cells where it may be involved in regulation of pluripotency. In embryonic stem cells (ESCs), important for normal expression of the pluripotency regulators POU5F1/OCT4 and KLF4. Also important for expression of the ectodermal marker gene NES and the endodermal marker gene GATA4. Promotes stem cell proliferation in vitro. This is Leucine-rich repeat-containing protein 34 from Mus musculus (Mouse).